A 460-amino-acid chain; its full sequence is MATGKIVQVIGAVVDVEFPQDAVPRVYDALEVQNGNEKLVLEVQQQLGGGIVRTIAMGSSDGLSRGLDVKDLEHPIEVPVGKATLGRIMNVLGEPVDMKGEIGEEERWAIHRAAPSYEELSNSQELLETGIKVIDLMCPFAKGGKVGLFGGAGVGKTVNMMELIRNIAIEHSGYSVFAGVGERTREGNDFYHEMTDSNVIDKVSLVYGQMNEPPGNRLRVALTGLTMAEKFRDEGRDVLLFVDNIYRYTLAGTEVSALLGRMPSAVGYQPTLAEEMGVLQERITSTKTGSITSVQAVYVPADDLTDPSPATTFAHLDATVVLSRQIASLGIYPAVDPLDSTSRQLDPLVVGQEHYDTARGVQSILQRYQELKDIIAILGMDELSEEDKLVVARARKIQRFLSQPFFVAEVFTGSPGKYVSLKDTIRGFKGIMEGEYDHLPEQAFYMVGSIDEAVEKAKKL.

ATP is bound at residue 150–157; that stretch reads GGAGVGKT.

It belongs to the ATPase alpha/beta chains family. In terms of assembly, F-type ATPases have 2 components, CF(1) - the catalytic core - and CF(0) - the membrane proton channel. CF(1) has five subunits: alpha(3), beta(3), gamma(1), delta(1), epsilon(1). CF(0) has three main subunits: a(1), b(2) and c(9-12). The alpha and beta chains form an alternating ring which encloses part of the gamma chain. CF(1) is attached to CF(0) by a central stalk formed by the gamma and epsilon chains, while a peripheral stalk is formed by the delta and b chains.

Its subcellular location is the cell inner membrane. It carries out the reaction ATP + H2O + 4 H(+)(in) = ADP + phosphate + 5 H(+)(out). Produces ATP from ADP in the presence of a proton gradient across the membrane. The catalytic sites are hosted primarily by the beta subunits. This chain is ATP synthase subunit beta, found in Salmonella gallinarum (strain 287/91 / NCTC 13346).